A 286-amino-acid polypeptide reads, in one-letter code: uncharacterized protein (286 aa).

Residues 2–221 (VDGMKHLILK…PIYIKNLQKR (220 aa)) form the Radical SAM core domain. 3 residues coordinate [4Fe-4S] cluster: Cys16, Cys20, and Cys23.

Belongs to the radical SAM superfamily. Anaerobic sulfatase-maturating enzyme family. [4Fe-4S] cluster is required as a cofactor.

This is an uncharacterized protein from Methanocaldococcus jannaschii (strain ATCC 43067 / DSM 2661 / JAL-1 / JCM 10045 / NBRC 100440) (Methanococcus jannaschii).